The chain runs to 620 residues: Glutathione-regulated potassium-efflux system protein KefC (620 aa).

12 helical membrane passes run 4–24 (HTLV…PIAV), 26–46 (LGLG…LWGL), 54–74 (SILH…GLEL), 90–110 (GALQ…LLGL), 114–134 (VAEL…MQAM), 149–169 (FAVL…IPLL), 178–198 (MGAF…VVLL), 218–238 (VFSA…EEVG), 270–290 (GLLL…GTLI), 294–314 (LRIV…LWLI), 327–347 (WFAV…GAAQ), and 359–379 (SLTL…VILN). The region spanning 399 to 518 (QPRVIIAGFG…AGVEKPERET (120 aa)) is the RCK N-terminal domain. Positions 597 to 620 (GWQGTEEGKHTGNMADEPETKPSS) are disordered.

Belongs to the monovalent cation:proton antiporter 2 (CPA2) transporter (TC 2.A.37) family. KefC subfamily. As to quaternary structure, homodimer. Interacts with the regulatory subunit KefF.

Its subcellular location is the cell inner membrane. Pore-forming subunit of a potassium efflux system that confers protection against electrophiles. Catalyzes K(+)/H(+) antiport. The polypeptide is Glutathione-regulated potassium-efflux system protein KefC (Shigella flexneri serotype 5b (strain 8401)).